The following is a 270-amino-acid chain: Phosphatidylinositol transfer protein alpha isoform (270 aa).

Residues Thr58, Lys60, Glu85, Asn89, Thr96, and Lys194 each contribute to the a 1,2-diacyl-sn-glycero-3-phospho-(1D-myo-inositol) site. Lys215 bears the N6-acetyllysine mark. Residues 250–263 (TKRQLDEMRQKDPV) show a composition bias toward basic and acidic residues. A disordered region spans residues 250-270 (TKRQLDEMRQKDPVKGMTADD).

This sequence belongs to the PtdIns transfer protein family. PI transfer class I subfamily.

The protein localises to the cytoplasm. It is found in the nucleus. The catalysed reaction is a 1,2-diacyl-sn-glycero-3-phosphocholine(in) = a 1,2-diacyl-sn-glycero-3-phosphocholine(out). The enzyme catalyses a 1,2-diacyl-sn-glycero-3-phospho-(1D-myo-inositol)(in) = a 1,2-diacyl-sn-glycero-3-phospho-(1D-myo-inositol)(out). Phosphatidylinositol transfer activity is inhibited by N-ethylmaleimide. In terms of biological role, catalyzes the transfer of phosphatidylinositol (PI) and phosphatidylcholine (PC) between membranes. Shows a preference for PI and PC containing shorter saturated or monosaturated acyl chains at the sn-1 and sn-2 positions. Preference order for PC is C16:1 &gt; C16:0 &gt; C18:1 &gt; C18:0 &gt; C20:4 and for PI is C16:1 &gt; C16:0 &gt; C18:1 &gt; C18:0 &gt; C20:4 &gt; C20:3. The protein is Phosphatidylinositol transfer protein alpha isoform (PITPNA) of Homo sapiens (Human).